The chain runs to 477 residues: Endo-1,4-beta-xylanase A (477 aa).

The first 41 residues, 1–41, serve as a signal peptide directing secretion; the sequence is MGSYALPRSGVRRSIRVLLLALVVGVLGTATALIAPPGAHA. A GH10 domain is found at 42–340; that stretch reads AESTLGAAAA…KAAYTAVLDA (299 aa). E169 functions as the Proton donor in the catalytic mechanism. The active-site Nucleophile is E277. Positions 361-477 constitute a Ricin B-type lectin domain; it reads SGRCLDVPDA…NGSNQRWTRT (117 aa). 3 cysteine pairs are disulfide-bonded: C364/C383, C406/C423, and C447/C466.

This sequence belongs to the glycosyl hydrolase 10 (cellulase F) family.

The protein resides in the secreted. The catalysed reaction is Endohydrolysis of (1-&gt;4)-beta-D-xylosidic linkages in xylans.. It participates in glycan degradation; xylan degradation. Its function is as follows. Contributes to hydrolyze hemicellulose, the major component of plant cell-walls. XLNA and XLNB seem to act sequentially on the substrate to yield xylobiose and xylose as carbon sources. In Streptomyces lividans, this protein is Endo-1,4-beta-xylanase A (xlnA).